A 1148-amino-acid chain; its full sequence is Minor outer capsid protein P2 (1148 aa).

Residues 929-1148 enclose the PPPDE domain; it reads ENNAANFFER…LYIQSIYDAL (220 aa). Active-site residues include histidine 953 and cysteine 1111.

Belongs to the phytoreovirus minor outer capsid protein P2 family. Interacts with host ent-kaurene oxidases OSKO1, OSKO2, OSKOL4 and OSKOL5; this interaction.

Its subcellular location is the virion. It is found in the host cytoplasm. Functionally, minor capsid protein present in the outer capsid, which is required for adsorption of the virus onto host insect cells (Potential). Could play a role in the host plant virus induced dwarfism. The protein is Minor outer capsid protein P2 of Rice dwarf virus (isolate O) (RDV).